The primary structure comprises 542 residues: Protein lin-9 homolog (542 aa).

Ala2 is subject to N-acetylalanine. The tract at residues 2–296 (AELDQLPDES…QKQRPSRFFM (295 aa)) is sufficient for interaction with RB1. Residue Lys21 forms a Glycyl lysine isopeptide (Lys-Gly) (interchain with G-Cter in SUMO2) linkage. Ser65 and Ser95 each carry phosphoserine. Phosphothreonine is present on residues Thr96 and Thr304. Phosphoserine is present on residues Ser309 and Ser321. The stretch at 355 to 413 (IKKEHIKKLREMNTDAEKLKSYSMPISIEFQRRYATIVLELEQLNKDLNKVLHKVQQYC) forms a coiled coil.

Belongs to the lin-9 family. Component of the DREAM complex (also named LINC complex) at least composed of E2F4, E2F5, LIN9, LIN37, LIN52, LIN54, MYBL1, MYBL2, RBL1, RBL2, RBBP4, TFDP1 and TFDP2. The complex exists in quiescent cells where it represses cell cycle-dependent genes. It dissociates in S phase when LIN9, LIN37, LIN52 and LIN54 form a subcomplex that binds to MYBL2. Interacts with RB1.

The protein localises to the nucleus. Its subcellular location is the nucleoplasm. Its function is as follows. Acts as a tumor suppressor. Inhibits DNA synthesis. Its ability to inhibit oncogenic transformation is mediated through its association with RB1. Plays a role in the expression of genes required for the G1/S transition. In Macaca fascicularis (Crab-eating macaque), this protein is Protein lin-9 homolog (LIN9).